The primary structure comprises 76 residues: Mating-type pheromone BBP1(1) (76 aa).

C73 bears the Cysteine methyl ester mark. Residue C73 is the site of S-farnesyl cysteine attachment. Positions 74-76 are cleaved as a propeptide — removed in mature form; it reads VVA.

The protein localises to the cell membrane. Functionally, activates B-regulated development. This is Mating-type pheromone BBP1(1) (BBP1(1)) from Schizophyllum commune (Split gill fungus).